A 340-amino-acid chain; its full sequence is Pre-mRNA-splicing factor cwf17 (340 aa).

WD repeat units lie at residues 48 to 87 (GHTA…KNYG), 91 to 130 (GCKG…KIRK), 133 to 173 (GHAG…CIKT), 175 to 214 (EEKY…CSHV), 217 to 256 (GHKD…SAQR), 267 to 306 (GQEH…RYVL), and 308 to 339 (GHEG…LGEL).

Belongs to the 40S cdc5-associated complex (or cwf complex), a spliceosome sub-complex reminiscent of a late-stage spliceosome composed of the U2, U5 and U6 snRNAs and at least brr2, cdc5, cwf2/prp3, cwf3/syf1, cwf4/syf3, cwf5/ecm2, spp42/cwf6, cwf7/spf27, cwf8, cwf9, cwf10, cwf11, cwf12, prp45/cwf13, cwf14, cwf15, cwf16, cwf17, cwf18, cwf19, cwf20, cwf21, cwf22, cwf23, cwf24, cwf25, cwf26, cyp7/cwf27, cwf28, cwf29/ist3, lea1, msl1, prp5/cwf1, prp10, prp12/sap130, prp17, prp22, sap61, sap62, sap114, sap145, slu7, smb1, smd1, smd3, smf1, smg1 and syf2.

Its subcellular location is the nucleus. Its function is as follows. Involved in mRNA splicing where it associates with cdc5 and the other cwf proteins as part of the spliceosome. This is Pre-mRNA-splicing factor cwf17 (cwf17) from Schizosaccharomyces pombe (strain 972 / ATCC 24843) (Fission yeast).